A 306-amino-acid chain; its full sequence is Nucleotide-binding protein MUL_1815 (306 aa).

Glycine 29 to glycine 36 is an ATP binding site. Aspartate 80 to serine 83 provides a ligand contact to GTP.

This sequence belongs to the RapZ-like family.

Its function is as follows. Displays ATPase and GTPase activities. The protein is Nucleotide-binding protein MUL_1815 of Mycobacterium ulcerans (strain Agy99).